The sequence spans 306 residues: Acetaldehyde dehydrogenase 3 (306 aa).

Catalysis depends on Cys131, which acts as the Acyl-thioester intermediate. Residues 162-170 and Asn273 contribute to the NAD(+) site; that span reads SVGPGTRKN.

Belongs to the acetaldehyde dehydrogenase family.

It catalyses the reaction acetaldehyde + NAD(+) + CoA = acetyl-CoA + NADH + H(+). The protein is Acetaldehyde dehydrogenase 3 of Burkholderia lata (strain ATCC 17760 / DSM 23089 / LMG 22485 / NCIMB 9086 / R18194 / 383).